The sequence spans 199 residues: Glycerol-3-phosphate acyltransferase (199 aa).

The next 5 helical transmembrane spans lie at 4 to 24 (LVSV…FLMG), 51 to 71 (WAAL…AYLG), 77 to 97 (EWGF…PVWL), 111 to 131 (VMLL…ALAV), and 152 to 172 (LFLL…AVVI).

It belongs to the PlsY family. Probably interacts with PlsX.

It is found in the cell membrane. The enzyme catalyses an acyl phosphate + sn-glycerol 3-phosphate = a 1-acyl-sn-glycero-3-phosphate + phosphate. The protein operates within lipid metabolism; phospholipid metabolism. Its function is as follows. Catalyzes the transfer of an acyl group from acyl-phosphate (acyl-PO(4)) to glycerol-3-phosphate (G3P) to form lysophosphatidic acid (LPA). This enzyme utilizes acyl-phosphate as fatty acyl donor, but not acyl-CoA or acyl-ACP. This is Glycerol-3-phosphate acyltransferase from Symbiobacterium thermophilum (strain DSM 24528 / JCM 14929 / IAM 14863 / T).